The chain runs to 660 residues: Threonine--tRNA ligase (660 aa).

The TGS domain occupies 1–64 (MSHSVSLTFP…TEGRIEIVTR (64 aa)). The tract at residues 245-547 (DHRRLGREMD…LLENFAGHMP (303 aa)) is catalytic. Residues Cys341, His392, and His524 each coordinate Zn(2+).

It belongs to the class-II aminoacyl-tRNA synthetase family. Homodimer. Zn(2+) is required as a cofactor.

The protein localises to the cytoplasm. It carries out the reaction tRNA(Thr) + L-threonine + ATP = L-threonyl-tRNA(Thr) + AMP + diphosphate + H(+). Catalyzes the attachment of threonine to tRNA(Thr) in a two-step reaction: L-threonine is first activated by ATP to form Thr-AMP and then transferred to the acceptor end of tRNA(Thr). Also edits incorrectly charged L-seryl-tRNA(Thr). The chain is Threonine--tRNA ligase from Sinorhizobium medicae (strain WSM419) (Ensifer medicae).